Here is a 368-residue protein sequence, read N- to C-terminus: tRNA-specific 2-thiouridylase MnmA (368 aa).

ATP contacts are provided by residues 11-18 (GMSGGVDS) and Met37. Positions 97-99 (NPD) are interaction with target base in tRNA. Cys102 (nucleophile) is an active-site residue. A disulfide bridge connects residues Cys102 and Cys199. ATP is bound at residue Gly127. Residues 149–151 (KDQ) form an interaction with tRNA region. The active-site Cysteine persulfide intermediate is the Cys199. An interaction with tRNA region spans residues 311 to 312 (RY).

Belongs to the MnmA/TRMU family. In terms of assembly, interacts with TusE.

Its subcellular location is the cytoplasm. It carries out the reaction S-sulfanyl-L-cysteinyl-[protein] + uridine(34) in tRNA + AH2 + ATP = 2-thiouridine(34) in tRNA + L-cysteinyl-[protein] + A + AMP + diphosphate + H(+). Catalyzes the 2-thiolation of uridine at the wobble position (U34) of tRNA(Lys), tRNA(Glu) and tRNA(Gln), leading to the formation of s(2)U34, the first step of tRNA-mnm(5)s(2)U34 synthesis. Sulfur is provided by IscS, via a sulfur-relay system. Binds ATP and its substrate tRNAs. In Shigella dysenteriae serotype 1 (strain Sd197), this protein is tRNA-specific 2-thiouridylase MnmA.